We begin with the raw amino-acid sequence, 65 residues long: Precursor peptide TigB (65 aa).

6 TIGSVS motif repeats span residues 16-21, 23-28, 33-38, 40-45, 47-52, and 54-59; these read TIGSVS. Residues Ile-17, Ile-24, Ile-34, Ile-41, Ile-48, and Ile-55 each carry the methylcyclopropylglycine modification.

In terms of processing, is subject to maturation by TigE, that catalyzes the formation of methylcyclopropylglycine (mCPG) residues from isoleucine residues residing in the repeating TIGSVS motifs.

Functionally, precursor peptide which undergoes post-translational modifications by tailoring enzymes, leading to the mature natural product. This Paramaledivibacter caminithermalis (strain DSM 15212 / CIP 107654 / DViRD3) (Clostridium caminithermale) protein is Precursor peptide TigB.